We begin with the raw amino-acid sequence, 405 residues long: K(+)/H(+) antiporter subunit KhtU (405 aa).

12 helical membrane passes run 3–23 (HLVF…VIAN), 29–49 (IIPF…KMGI), 60–80 (IIEF…GLEF), 85–105 (LIKS…INFS), 108–128 (LLYG…AGVI), 153–173 (LILG…SVVS), 183–203 (VGSA…FFIA), 222–242 (VFII…ETIH), 268–288 (LVVP…GLSI), 297–317 (VWLA…AGMV), 332–352 (IGLT…LGIA), and 357–377 (ATLK…GPLV).

It belongs to the monovalent cation:proton antiporter 2 (CPA2) transporter (TC 2.A.37) family. As to quaternary structure, the transporter is composed of the integral membrane protein KhtU and the regulatory protein KhtT.

It is found in the cell membrane. With respect to regulation, potassium antiport activity requires the presence of KhtT. Activity is also modulated by KhtS. Has higher activity at alkaline pH. Potassium/proton antiporter that mediates the efflux of potassium ions from the cell. Can also mediate rubidium/proton antiport, but has no permeability for sodium or lithium ions. In the absence of KhtT, does not have antiport activity, but can catalyze potassium efflux. Involved in protection of the cell from methylglyoxal, a toxic by-product of glycolysis, via activation by S-lactoyl-BSH of the antiporter activity, leading to cytoplasmic acidification and methylglyoxal resistance. The chain is K(+)/H(+) antiporter subunit KhtU from Bacillus subtilis (strain 168).